The following is a 354-amino-acid chain: G-protein coupled receptor homolog US28 (354 aa).

At methionine 1–leucine 37 the chain is on the extracellular side. Asparagine 30 carries N-linked (GlcNAc...) asparagine; by host glycosylation. A helical membrane pass occupies residues phenylalanine 38–isoleucine 58. Residues threonine 59 to aspartate 69 are Cytoplasmic-facing. Residues valine 70 to methionine 90 traverse the membrane as a helical segment. The Extracellular portion of the chain corresponds to glutamine 91–serine 101. The helical transmembrane segment at valine 102–isoleucine 122 threads the bilayer. Residues threonine 123–cysteine 145 lie on the Cytoplasmic side of the membrane. The chain crosses the membrane as a helical span at residues leucine 146–valine 166. The Extracellular segment spans residues threonine 167–serine 183. A helical transmembrane segment spans residues tyrosine 184–isoleucine 204. The Cytoplasmic segment spans residues serine 205–arginine 228. Residues valine 229–phenylalanine 249 form a helical membrane-spanning segment. Over valine 250–leucine 273 the chain is Extracellular. The chain crosses the membrane as a helical span at residues isoleucine 274–valine 294. Residues glycine 295–proline 354 are Cytoplasmic-facing.

It belongs to the G-protein coupled receptor 1 family. As to quaternary structure, interacts with host GPRASP1; this interaction targets US28 to lysosomes for degradation. Interacts with host CX3CL1/Fractalkine (via N-terminus). Interacts with host Gi alpha-1 subunit GNAI1; this interaction does not lead to the catalytic activation of Gi complex. In terms of processing, phosphorylated. High phosphorylation occurs concomitantly with receptor endocytosis and correlate with low receptor presence at the plasma membrane.

Its subcellular location is the host cell membrane. Its function is as follows. Binds to a great number of different CC-chemokines including CCL5/RANTES, CCL2/MCP-1, CCL3/MIP-1-alpha as well as CX3CL1/Fractalkine. Transduces signals resulting in the activation of MAP kinase signaling pathways and augmentation of intracellular calcium ion levels, leading to alterations in chemotactic behavior of vascular smooth muscle cells and macrophages. The US28 receptor also exhibits high levels of agonist-independent signaling activity and agonist-independent endocytosis. Interacts with the host Gi complex without activating it, thereby probably interfering with the chemokine-Gi signaling. May also function as a G protein sink to sequester G protein from the cell surface via internalization. Interacts with endogenous Gaq/11 subunits and thereby constitutively activates phospholipase C. This chain is G-protein coupled receptor homolog US28 (US28), found in Homo sapiens (Human).